The following is a 346-amino-acid chain: Acetyl-coenzyme A carboxylase carboxyl transferase subunit beta (346 aa).

The 269-residue stretch at 24 to 292 folds into the CoA carboxyltransferase N-terminal domain; sequence LWIKCPKSGD…LPEVEPIAVA (269 aa). A compositionally biased stretch (acidic residues) spans 300 to 311; the sequence is AEAEAAPDEVVE. Residues 300-346 are disordered; it reads AEAEAAPDEVVEVEAPAVDEIVEEKPAATKAKPRSKAKSKAAPKTDE. The span at 330-340 shows a compositional bias: basic residues; it reads AKPRSKAKSKA.

It belongs to the AccD/PCCB family. Acetyl-CoA carboxylase is a heterohexamer composed of biotin carboxyl carrier protein (AccB), biotin carboxylase (AccC) and two subunits each of ACCase subunit alpha (AccA) and ACCase subunit beta (AccD).

It is found in the cytoplasm. The enzyme catalyses N(6)-carboxybiotinyl-L-lysyl-[protein] + acetyl-CoA = N(6)-biotinyl-L-lysyl-[protein] + malonyl-CoA. The protein operates within lipid metabolism; malonyl-CoA biosynthesis; malonyl-CoA from acetyl-CoA: step 1/1. In terms of biological role, component of the acetyl coenzyme A carboxylase (ACC) complex. Biotin carboxylase (BC) catalyzes the carboxylation of biotin on its carrier protein (BCCP) and then the CO(2) group is transferred by the transcarboxylase to acetyl-CoA to form malonyl-CoA. This Hirschia baltica (strain ATCC 49814 / DSM 5838 / IFAM 1418) protein is Acetyl-coenzyme A carboxylase carboxyl transferase subunit beta.